Here is a 579-residue protein sequence, read N- to C-terminus: Moesin a (579 aa).

Residues 5–295 enclose the FERM domain; sequence ISVRVTTMDA…GNHELYMRRR (291 aa). A coiled-coil region spans residues 306–448; the sequence is KAQAKEEKNH…EDEALEWQTK (143 aa). Disordered stretches follow at residues 308–341, 376–418, and 464–519; these read QAKE…EKIE, EQER…EHLA, and KNKV…KNER. Basic and acidic residues predominate over residues 376-400; it reads EQERKRAQEEAERLERERRLAEEAK. A compositionally biased stretch (low complexity) spans 490-501; the sequence is AEASAELTSAAA. A compositionally biased stretch (basic and acidic residues) spans 502–519; the sequence is YKDRSEEERMTEAEKNER. The stretch at 517 to 551 forms a coiled coil; the sequence is NERVQKHLLALTSELANARDETKKTQNDIIHAENV.

The protein localises to the cell membrane. It is found in the cell junction. Positively regulates endothelial adherens junction formation and stabilization. Is thereby required for intersegmental vessel luminal membrane formation and stabilization during tubulogenesis in the early stages of development, independent of blood flow dynamics. The chain is Moesin a from Danio rerio (Zebrafish).